Consider the following 498-residue polypeptide: MTDRSTLDDAPAQADFIIAGATLIDGGGGPARQGDLAVRGGRIVALGDFAHAPGVPVIDARGLALAPGFIDSHTHDDGYLLAHPEMLPKVSQGITTVVTGNCGISLAPLSRRQIPQPLDLLGPPELFRFATFRDWLRALAETPAAVNVIPLVGHTTLRVAVMDDTGRAATDAERAAMRALLDEALQAGAFGVSTGTFYPPASAAPTDEIIDVCQPLRGRAGAIYATHLRDEADHIVPAMEEALLIGRELDCRVVFSHHKLAGERNHGRSRETLDMISRAAATQRVCLDCHPYPATSTMLRLDRARLASRTLITWSKGYPEATGRDFSEVMAELGLDDEAAIARLAPAGAIYFLMDQADVNRIFSHPLTTVGSDGLPFDPHPHPRQWGTFTNVLRTMVREQRLLSLETAIHKMTGLAAAQYGLTERGLLRQGYHADLVLFDPANVTDTATFSAPIQVSQGIHAVWVNGRQVWDGERTGAERPGQVLAPGDAIPWSQQSE.

The segment at 478–498 (AERPGQVLAPGDAIPWSQQSE) is disordered.

The protein belongs to the metallo-dependent hydrolases superfamily. N-acyl-D-amino-acid deacylase family. Zn(2+) is required as a cofactor.

Its subcellular location is the cytoplasm. It catalyses the reaction an N-acyl-D-aspartate + H2O = D-aspartate + a carboxylate. The protein is N-acyl-D-aspartate deacylase of Alcaligenes xylosoxydans xylosoxydans (Achromobacter xylosoxidans).